Reading from the N-terminus, the 270-residue chain is ParA family protein MPN_688 (270 aa).

The protein belongs to the ParA family.

The chain is ParA family protein MPN_688 from Mycoplasma pneumoniae (strain ATCC 29342 / M129 / Subtype 1) (Mycoplasmoides pneumoniae).